The primary structure comprises 108 residues: UPF0060 membrane protein YnfA (108 aa).

At 1–5 (MIKTT) the chain is on the periplasmic side. Residues 6 to 26 (LLFFATALCEIIGCFLPWLWL) traverse the membrane as a helical segment. At 27–30 (KRNA) the chain is on the cytoplasmic side. Residues 31 to 51 (SIWLLLPAGISLALFVWLLTL) traverse the membrane as a helical segment. Over 52-60 (HPAASGRVY) the chain is Periplasmic. Residues 61–81 (AAYGGVYVCTALIWLRVVDGV) traverse the membrane as a helical segment. The Cytoplasmic portion of the chain corresponds to 82–84 (KLT). The helical transmembrane segment at 85–105 (LYDWTGALIALCGMLIIVAGW) threads the bilayer. At 106-108 (GRT) the chain is on the periplasmic side.

Belongs to the UPF0060 family.

Its subcellular location is the cell inner membrane. The sequence is that of UPF0060 membrane protein YnfA from Escherichia coli O127:H6 (strain E2348/69 / EPEC).